We begin with the raw amino-acid sequence, 302 residues long: 3-methyl-2-oxobutanoate hydroxymethyltransferase 1 (302 aa).

Positions 75 and 118 each coordinate Mg(2+). Residues D75–S76, D118, and K147 each bind 3-methyl-2-oxobutanoate. E149 contributes to the Mg(2+) binding site. E217 acts as the Proton acceptor in catalysis.

Belongs to the PanB family. As to quaternary structure, homodecamer; pentamer of dimers. Mg(2+) serves as cofactor.

The protein localises to the cytoplasm. The catalysed reaction is 3-methyl-2-oxobutanoate + (6R)-5,10-methylene-5,6,7,8-tetrahydrofolate + H2O = 2-dehydropantoate + (6S)-5,6,7,8-tetrahydrofolate. The protein operates within cofactor biosynthesis; (R)-pantothenate biosynthesis; (R)-pantoate from 3-methyl-2-oxobutanoate: step 1/2. Functionally, catalyzes the reversible reaction in which hydroxymethyl group from 5,10-methylenetetrahydrofolate is transferred onto alpha-ketoisovalerate to form ketopantoate. This is 3-methyl-2-oxobutanoate hydroxymethyltransferase 1 from Zymomonas mobilis subsp. mobilis (strain ATCC 31821 / ZM4 / CP4).